Here is a 731-residue protein sequence, read N- to C-terminus: 1,4-alpha-glucan branching enzyme GlgB (731 aa).

Asp-408 serves as the catalytic Nucleophile. The active-site Proton donor is the Glu-461.

This sequence belongs to the glycosyl hydrolase 13 family. GlgB subfamily. As to quaternary structure, monomer.

The enzyme catalyses Transfers a segment of a (1-&gt;4)-alpha-D-glucan chain to a primary hydroxy group in a similar glucan chain.. The protein operates within glycan biosynthesis; glycogen biosynthesis. Catalyzes the formation of the alpha-1,6-glucosidic linkages in glycogen by scission of a 1,4-alpha-linked oligosaccharide from growing alpha-1,4-glucan chains and the subsequent attachment of the oligosaccharide to the alpha-1,6 position. This chain is 1,4-alpha-glucan branching enzyme GlgB, found in Corynebacterium glutamicum (strain ATCC 13032 / DSM 20300 / JCM 1318 / BCRC 11384 / CCUG 27702 / LMG 3730 / NBRC 12168 / NCIMB 10025 / NRRL B-2784 / 534).